Here is a 426-residue protein sequence, read N- to C-terminus: Synaptotagmin-13 (426 aa).

Over 1–6 (MVLSVP) the chain is Vesicular. A helical membrane pass occupies residues 7–29 (VIALGATLGTATSILALCGVTCL). Topologically, residues 30–426 (CRHMHPKKGL…QIAMWHQLHL (397 aa)) are cytoplasmic. C2 domains are found at residues 158–275 (QAPK…AQWG) and 287–422 (GAGE…AMWH).

It belongs to the synaptotagmin family. Interacts with NRXN1. Expressed in brain, heart, spleen, lung and testis.

The protein localises to the cytoplasmic vesicle membrane. In terms of biological role, may be involved in transport vesicle docking to the plasma membrane. The chain is Synaptotagmin-13 (Syt13) from Mus musculus (Mouse).